We begin with the raw amino-acid sequence, 284 residues long: Putative ABC transporter ATP-binding protein tll2439 (284 aa).

An ABC transporter domain is found at 6-242 (LEFHQVGFRY…WPTFAPELGT (237 aa)). 40-47 (GLNGSGKS) contributes to the ATP binding site.

Belongs to the ABC transporter superfamily.

It localises to the cell inner membrane. Functionally, probably part of an ABC transporter complex. Responsible for energy coupling to the transport system. This chain is Putative ABC transporter ATP-binding protein tll2439, found in Thermosynechococcus vestitus (strain NIES-2133 / IAM M-273 / BP-1).